The chain runs to 458 residues: MAKMYRKLALCGGEGGQEWDDDVYEGVRKVYVGQDLNRITYIKFEYVQEDGEVVTTEYGTTNQHPKEFVIQYPDEHIIAVEGSYHQVALIATEVITSLVFKTSKGRKSPLFGPNLLGITTGTKFVFEDEGKKIVGFHGRAGDAVDALGVYFVLDTTPFPLYKLDAQGGTDGRVWDDGSYDGIKTLRIDQDNSRITYLEVEYEKDGEAKTCNHGGKGDTPSEFVLGYPDEYIKSVEATYQKPNIFSNTAITSLKFLTSKGRTSFFGYNVGKKFVLEQKGHRLVGFHGKEDAAIDALGAYFGPVPTPTPLIPSKKLPAIGGNEGVTWDDGVYDGVRKILVGQGNDGVSFVKFEYSKGKDLVPGDDHGKKTLLGAEEFVLEDGEYLMNIDGYYDKIFGVEEPIIVCLQFKTNKRESMPFGMDSGKKFSLGEEGHKIVGFHGQASDVVHSIGVTIVPITTTE.

3 Jacalin-type lectin domains span residues 5–153 (YRKL…YFVL), 160–301 (LYKL…YFGP), and 311–453 (SKKL…TIVP).

It belongs to the jacalin lectin family. In terms of assembly, component of the PYK10 complex, at least composed of PYK10/BGLU23, BGLU21, BGLU22, JAL22, JAL23, PBP1/JAL30, PBP2/JAL31, JAL32, JAL33, JAL34, JAL35, GLL22 and GLL23.

In terms of biological role, inhibitor-type lectin that may regulate the correct polymerization and activation of BGLU23/PYK10 upon tissue damage. In Arabidopsis thaliana (Mouse-ear cress), this protein is Jacalin-related lectin 22 (JAL22).